A 216-amino-acid polypeptide reads, in one-letter code: Large ribosomal subunit protein eL15 (216 aa).

It belongs to the eukaryotic ribosomal protein eL15 family.

This is Large ribosomal subunit protein eL15 from Metallosphaera sedula (strain ATCC 51363 / DSM 5348 / JCM 9185 / NBRC 15509 / TH2).